Consider the following 707-residue polypeptide: Pheromone-processing carboxypeptidase KEX1 (707 aa).

Positions 1 to 17 (MLLSVFIILINTLFVLA) are cleaved as a signal peptide. The Lumenal portion of the chain corresponds to 18–564 (IPPKEGSDNN…EESTSSKFTR (547 aa)). N-linked (GlcNAc...) asparagine glycans are attached at residues N64 and N121. The active site involves S183. 2 N-linked (GlcNAc...) asparagine glycosylation sites follow: N293 and N378. Residue D393 is part of the active site. Residues N440 and N448 are each glycosylated (N-linked (GlcNAc...) asparagine). H451 is an active-site residue. Residues 496-557 (GQEIPADESS…ASFIPEPEES (62 aa)) are disordered. The segment covering 503–533 (ESSKPIEDKPDDKPIEDKPEETKPEQTKPED) has biased composition (basic and acidic residues). The segment covering 536–549 (SSSTSEIIPTSEAS) has biased composition (low complexity). A helical membrane pass occupies residues 565–585 (LIQLGVIFIIFWGVYILYVSY). At 586 to 707 (RARPSSIIKK…GNPKKTESKS (122 aa)) the chain is on the cytoplasmic side. The tract at residues 644 to 707 (NTSNRGRYAP…GNPKKTESKS (64 aa)) is disordered. A compositionally biased stretch (acidic residues) spans 683–694 (SDDDEDDDEDVE). The segment covering 695–707 (THEGNPKKTESKS) has biased composition (basic and acidic residues).

This sequence belongs to the peptidase S10 family.

The protein resides in the golgi apparatus. The protein localises to the trans-Golgi network membrane. It carries out the reaction Preferential release of a C-terminal arginine or lysine residue.. Functionally, protease with a carboxypeptidase B-like function involved in the C-terminal processing of the lysine and arginine residues from protein precursors. Promotes cell fusion and is involved in the programmed cell death. The protein is Pheromone-processing carboxypeptidase KEX1 (KEX1) of Candida tropicalis (strain ATCC MYA-3404 / T1) (Yeast).